Consider the following 122-residue polypeptide: Large ribosomal subunit protein uL14 (122 aa).

The protein belongs to the universal ribosomal protein uL14 family. In terms of assembly, part of the 50S ribosomal subunit. Forms a cluster with proteins L3 and L19. In the 70S ribosome, L14 and L19 interact and together make contacts with the 16S rRNA in bridges B5 and B8.

Its function is as follows. Binds to 23S rRNA. Forms part of two intersubunit bridges in the 70S ribosome. The sequence is that of Large ribosomal subunit protein uL14 from Shewanella sediminis (strain HAW-EB3).